The primary structure comprises 1871 residues: Callose synthase 4 (1871 aa).

Over 1-491 (MNQPNRGQIL…FWHLFRSFDR (491 aa)) the chain is Cytoplasmic. Residues 492–512 (MWSFYILSLQAMIIIAWNETS) form a helical membrane-spanning segment. Topologically, residues 513-521 (ESGGAVFHK) are extracellular. Residues 522-542 (VLSVFITAAKLNLFQAFLDIA) form a helical membrane-spanning segment. The Cytoplasmic portion of the chain corresponds to 543–558 (LSWKARHSMSTHVRQR). The chain crosses the membrane as a helical span at residues 559–579 (YIFKAVAAAVWVLLMPLTYAY). Over 580–583 (SHTS) the chain is Extracellular. Residues 584–604 (IFIVAILIYLSPNMLPEMLLL) form a helical membrane-spanning segment. The Cytoplasmic segment spans residues 605–640 (IPSIRRTLEKSDFRPVKLIMWWSQPELYIGRGMHES). A helical membrane pass occupies residues 641 to 661 (AWSIYKYMMFWIVLLTSKLAF). Over 662 to 701 (SYYVEQIKPLMGPTKEIMSVPMPGYWLPEFFPHVKNNRGV) the chain is Extracellular. A helical transmembrane segment spans residues 702-724 (VITLWSPVILVYFMDTQIWYAIV). Topologically, residues 725-1441 (STLVGGLYGA…FDFFRMLSCY (717 aa)) are cytoplasmic. A helical membrane pass occupies residues 1442-1462 (FTTVGFYFCSMLTVLTVYVFL). The Extracellular portion of the chain corresponds to 1463-1485 (YGRLYLVLSGVEKELGNKPMMME). The helical transmembrane segment at 1486 to 1506 (IILASQSFVQIVFLMAMPMIM) threads the bilayer. Over 1507-1516 (EIGLERGFYD) the chain is Cytoplasmic. Residues 1517–1537 (ALFDFVLMQLQLASVFFTFQL) traverse the membrane as a helical segment. Residues 1538–1580 (GTKFHYYCKTLLHGGAEYRGTGRGFVVFHAKFAENYRFYSRSH) lie on the Extracellular side of the membrane. A run of 2 helical transmembrane segments spans residues 1581 to 1601 (FVKA…GPTY) and 1602 to 1622 (IGLF…APFL). Over 1623 to 1675 (FNPSGFEWHEIVEDWADWKKWIEYDNGGIGVPPEKSWESWWEKDIEHLQHSGK) the chain is Extracellular. The helical transmembrane segment at 1676–1696 (WGIVVEIFFALRFFIFQYGLV) threads the bilayer. At 1697–1708 (YQLSAFKNKYSS) the chain is on the cytoplasmic side. Residues 1709–1729 (LWVFGASWLLILILLLTVTVL) form a helical membrane-spanning segment. Over 1730 to 1741 (DYARRRLGTEFQ) the chain is Extracellular. Residues 1742 to 1762 (LLFRIIKVSLFLAFMAIFITL) traverse the membrane as a helical segment. Residues 1763 to 1772 (MTCRLILPQD) lie on the Cytoplasmic side of the membrane. The chain crosses the membrane as a helical span at residues 1773–1793 (VFLCMLALIPTGWGLLLIAQS). Residues 1794 to 1815 (CKPLIQQPGIWSWVMTLAWVYD) lie on the Extracellular side of the membrane. The chain crosses the membrane as a helical span at residues 1816-1836 (LVMGSLLFIPIAFMAWFPFIS). Residues 1837–1871 (EFQTRMLFNQAFSRGLHISRILSGQRKHRSSKNKD) lie on the Cytoplasmic side of the membrane.

It belongs to the glycosyltransferase 48 family.

Its subcellular location is the cell membrane. The enzyme catalyses [(1-&gt;3)-beta-D-glucosyl](n) + UDP-alpha-D-glucose = [(1-&gt;3)-beta-D-glucosyl](n+1) + UDP + H(+). Its function is as follows. Involved in callose synthesis at the forming cell plate during cytokinesis. During plant growth and development, callose is found as a transitory component of the cell plate in dividing cells, is a major component of pollen mother cell walls and pollen tubes, and is found as a structural component of plasmodesmatal canals. The sequence is that of Callose synthase 4 (CALS4) from Arabidopsis thaliana (Mouse-ear cress).